An 878-amino-acid chain; its full sequence is Longitudinals lacking protein, isoforms N/O/W/X/Y (878 aa).

The BTB domain maps to 32 to 97; that stretch reads VDCTLAAEGK…MYRGEVNISQ (66 aa). Disordered stretches follow at residues 115–200, 228–340, and 542–583; these read LSDN…SSVL, SSGP…ASAS, and QIVK…QTHA. Low complexity-rich tracts occupy residues 162–175, 228–251, 263–293, 329–340, and 546–569; these read SGDV…SSSP, SSGP…LTST, TSST…QTTS, NSATGPNPASAS, and QQHQ…QQQQ. Residues 709–731 form a C2H2-type 1; degenerate zinc finger; sequence YACNVCGKTYKIKGSLKRHKNYE. The C2H2-type 2 zinc-finger motif lies at 794 to 816; sequence FQCDFCLKWFKRRSHLNRHKKLH. The interval 826 to 863 is disordered; that stretch reads SKQKPKTTSGQNLSHDANTDDEVATTNPAATEDESNYP. Over residues 831–841 the composition is skewed to polar residues; that stretch reads KTTSGQNLSHD.

By stage 11, isoform W, isoform X and isoform Y are expressed throughout the mesoderm, whereas isoform O is expressed in both mesoderm and ectoderm. From stage 15, expression of isoform O expands to all tissues, whereas expression of isoform W, isoform X and isoform Y becomes restricted during later stages; starting from stage 14 to 16, isoform W, isoform X and isoform Y are expressed in muscle. From stages 14 and 15, isoform W and isoform Y are expressed in the gut. For some isoforms, expression is also seen in specific types of cells in the embryo; isoform O is expressed in the ventral furrow at stage 5 and in the dorsal epidermis from stage 7. Isoform Y shows prominent expression in the gonad starting at stage 15.

Its subcellular location is the nucleus. In terms of biological role, putative transcription factor required for axon growth and guidance in the central and peripheral nervous systems. Repels CNS axons away from the midline by promoting the expression of the midline repellent sli and its receptor robo. In Drosophila melanogaster (Fruit fly), this protein is Longitudinals lacking protein, isoforms N/O/W/X/Y.